A 138-amino-acid polypeptide reads, in one-letter code: Ribulose bisphosphate carboxylase small subunit (138 aa).

The protein belongs to the RuBisCO small chain family. As to quaternary structure, heterohexadecamer of 8 large and 8 small subunits.

It is found in the plastid. The protein resides in the chloroplast. In terms of biological role, ruBisCO catalyzes two reactions: the carboxylation of D-ribulose 1,5-bisphosphate, the primary event in carbon dioxide fixation, as well as the oxidative fragmentation of the pentose substrate in the photorespiration process. Both reactions occur simultaneously and in competition at the same active site. Although the small subunit is not catalytic it is essential for maximal activity. Carbon dioxide and oxygen bind in the same pocket of the enzyme in a similar manner. This chain is Ribulose bisphosphate carboxylase small subunit, found in Galdieria sulphuraria (Red alga).